The following is a 314-amino-acid chain: MLMNYSSATEFYLLGFPGSEELHHILFAIFFFFYLVTLMGNTVIIMIVCVDKRLQSPMYFFLGHLSALEILVTTIIVPVMLWGLLLPGMQTIYLSACVVQLFLYLAVGTTEFALLGAMAVDRYVAVCNPLRYNIIMNRHTCNFVVLVSWVFGFLFQIWPVYVMFQLTYCKSNVVNNFFCDRGQLLKLSCNNTLFTEFILFLMAVFVLFGSLIPTIVSNAYIISTILKIPSSSGRRKSFSTCASHFTCVVIGYGSCLFLYVKPKQTQAADYNWVVSLMVSVVTPFLNPFIFTLRNDKVIEALRDGVKRCCQLFRN.

Topologically, residues 1-24 (MLMNYSSATEFYLLGFPGSEELHH) are extracellular. A glycan (N-linked (GlcNAc...) asparagine) is linked at Asn4. The helical transmembrane segment at 25 to 45 (ILFAIFFFFYLVTLMGNTVII) threads the bilayer. At 46–53 (MIVCVDKR) the chain is on the cytoplasmic side. Residues 54-74 (LQSPMYFFLGHLSALEILVTT) form a helical membrane-spanning segment. Residues 75 to 99 (IIVPVMLWGLLLPGMQTIYLSACVV) are Extracellular-facing. Cys97 and Cys189 are joined by a disulfide. Residues 100–120 (QLFLYLAVGTTEFALLGAMAV) form a helical membrane-spanning segment. Residues 121–139 (DRYVAVCNPLRYNIIMNRH) lie on the Cytoplasmic side of the membrane. The chain crosses the membrane as a helical span at residues 140-160 (TCNFVVLVSWVFGFLFQIWPV). The Extracellular portion of the chain corresponds to 161–197 (YVMFQLTYCKSNVVNNFFCDRGQLLKLSCNNTLFTEF). Asn190 carries an N-linked (GlcNAc...) asparagine glycan. A helical transmembrane segment spans residues 198–217 (ILFLMAVFVLFGSLIPTIVS). The Cytoplasmic segment spans residues 218–237 (NAYIISTILKIPSSSGRRKS). A helical transmembrane segment spans residues 238-258 (FSTCASHFTCVVIGYGSCLFL). Topologically, residues 259-271 (YVKPKQTQAADYN) are extracellular. A helical membrane pass occupies residues 272–292 (WVVSLMVSVVTPFLNPFIFTL). Residues 293–314 (RNDKVIEALRDGVKRCCQLFRN) are Cytoplasmic-facing.

The protein belongs to the G-protein coupled receptor 1 family.

The protein localises to the cell membrane. Its function is as follows. Odorant receptor. This Homo sapiens (Human) protein is Olfactory receptor 9A4 (OR9A4).